A 327-amino-acid chain; its full sequence is Elongation factor P--(R)-beta-lysine ligase (327 aa).

80–82 (SPE) is a substrate binding site. Residues 104-106 (RNE) and N113 each bind ATP. Residue Y122 coordinates substrate. 246–247 (EL) is a binding site for ATP. E253 contacts substrate. G302 is a binding site for ATP.

It belongs to the class-II aminoacyl-tRNA synthetase family. EpmA subfamily. In terms of assembly, homodimer.

The enzyme catalyses D-beta-lysine + L-lysyl-[protein] + ATP = N(6)-((3R)-3,6-diaminohexanoyl)-L-lysyl-[protein] + AMP + diphosphate + H(+). With EpmB is involved in the beta-lysylation step of the post-translational modification of translation elongation factor P (EF-P). Catalyzes the ATP-dependent activation of (R)-beta-lysine produced by EpmB, forming a lysyl-adenylate, from which the beta-lysyl moiety is then transferred to the epsilon-amino group of a conserved specific lysine residue in EF-P. The protein is Elongation factor P--(R)-beta-lysine ligase of Haemophilus ducreyi (strain 35000HP / ATCC 700724).